The primary structure comprises 1462 residues: Glucosyltransferase-S (1462 aa).

Positions 35 to 164 are disordered; sequence SSVSAETEQQ…RQTAAQENKN (130 aa). Residues 37–52 are compositionally biased toward polar residues; sequence VSAETEQQTSDKVVTQ. Over residues 71-85 the composition is skewed to low complexity; it reads TKQAQTEQTQAQSQA. Residues 86–108 are compositionally biased toward polar residues; sequence NVADTSTSITKETPSQNITTQAN. A compositionally biased stretch (basic and acidic residues) spans 109–133; it reads SDDKTVTNTKSEEAQTSEERTKQAE. The span at 134-149 shows a compositional bias: low complexity; the sequence is EAQATASSQALTQAKA. Polar residues predominate over residues 154-163; that stretch reads QRQTAAQENK. 14 Cell wall-binding repeats span residues 171–190, 192–211, 1095–1115, 1116–1136, 1137–1156, 1180–1201, 1202–1221, 1223–1244, 1246–1266, 1267–1286, 1310–1330, 1331–1350, 1352–1372, and 1374–1394; these read IPNV…DGQP, KNFA…NTGA, STGF…GYQA, KNSF…NGHM, VYGL…NGVQ, SNGY…SGVM, AVGL…DGYQ, KGAW…SGNM, VNRF…DGIA, LVGV…DGKQ, RNIF…DGVA, VTGS…DGKQ, KGSF…SGEL, and VNRF…NGEA.

It belongs to the glycosyl hydrolase 70 family.

The protein resides in the secreted. The enzyme catalyses [(1-&gt;6)-alpha-D-glucosyl](n) + sucrose = [(1-&gt;6)-alpha-D-glucosyl](n+1) + D-fructose. Functionally, production of extracellular glucans, that are thought to play a key role in the development of the dental plaque because of their ability to adhere to smooth surfaces and mediate the aggregation of bacterial cells and food debris. The polypeptide is Glucosyltransferase-S (gtfD) (Streptococcus mutans serotype c (strain ATCC 700610 / UA159)).